Here is a 581-residue protein sequence, read N- to C-terminus: Neither inactivation nor afterpotential protein G (581 aa).

The signal sequence occupies residues 1–26; sequence MGMKFQKILVLAGIVIGFLSIIVVLA. FAD is bound at residue 48 to 77; the sequence is DYVIVGGGTGGSTLTSLLAKNSNGSVLLIE. N-linked (GlcNAc...) asparagine glycosylation is found at asparagine 70, asparagine 156, asparagine 404, and asparagine 464. The active-site Proton acceptor is the histidine 516.

The protein belongs to the GMC oxidoreductase family. FAD serves as cofactor.

The protein localises to the secreted. Oxidoreductase involved in biosynthesis of 3-hydroxyretinal, a chromophore for rhodopsin Rh1. Not responsible for the initial hydroxylation of the retinal ring but rather acts in a subsequent step in chromophore production. May catalyze the conversion of (3R)-3-hydroxyretinol to the 3S enantiomer. This is Neither inactivation nor afterpotential protein G (ninaG) from Drosophila melanogaster (Fruit fly).